The primary structure comprises 1250 residues: Phospholipid-transporting ATPase IC (1250 aa).

Composition is skewed to acidic residues over residues Met-1–Ser-13 and Ser-24–Pro-40. Positions Met-1–Ser-52 are disordered. Over Met-1 to Gln-133 the chain is Cytoplasmic. A helical membrane pass occupies residues Ile-134–Ala-154. The Exoplasmic loop portion of the chain corresponds to Ile-155–Met-338. The chain crosses the membrane as a helical span at residues Val-339–Phe-359. Residues Trp-360–Gly-385 are Cytoplasmic-facing. The chain crosses the membrane as a helical span at residues Phe-386–Val-406. At Ser-407 to Asn-956 the chain is on the exoplasmic loop side. Catalysis depends on Asp-454, which acts as the 4-aspartylphosphate intermediate. Positions 454, 455, 456, 553, 594, 617, 650, 730, 731, 732, 865, and 871 each coordinate ATP. Asp-454 provides a ligand contact to Mg(2+). Residue Thr-456 coordinates Mg(2+). Asp-891 serves as a coordination point for Mg(2+). Residues Asn-894 and Asp-895 each contribute to the ATP site. Asp-895 serves as a coordination point for Mg(2+). Residues Phe-957 to Val-977 form a helical membrane-spanning segment. At Tyr-978 to Asp-980 the chain is on the cytoplasmic side. A helical membrane pass occupies residues Trp-981–Leu-1001. The Exoplasmic loop segment spans residues Asp-1002–Ser-1034. Residues Leu-1035–Leu-1055 traverse the membrane as a helical segment. The Cytoplasmic segment spans residues Thr-1056–Ser-1069. A helical membrane pass occupies residues Phe-1070–Thr-1090. Topologically, residues Ser-1091–Tyr-1092 are exoplasmic loop. The chain crosses the membrane as a helical span at residues Trp-1093–Phe-1113. At Asp-1114–Ser-1117 the chain is on the cytoplasmic side. A helical transmembrane segment spans residues Ala-1118–Leu-1138. Topologically, residues Arg-1139–Gln-1140 are exoplasmic loop. The chain crosses the membrane as a helical span at residues Pro-1141–Leu-1161. The Cytoplasmic segment spans residues Arg-1162–Thr-1250.

It belongs to the cation transport ATPase (P-type) (TC 3.A.3) family. Type IV subfamily. Component of a P4-ATPase flippase complex which consists of a catalytic alpha subunit and an accessory beta subunit. The flippase ATP8B1:TMEM30A complex can form an intermediate phosphoenzyme in vitro. Also interacts with beta subunit TMEM30B. It depends on Mg(2+) as a cofactor.

The protein resides in the cell membrane. Its subcellular location is the apical cell membrane. It localises to the cell projection. The protein localises to the stereocilium. It is found in the endoplasmic reticulum. The protein resides in the golgi apparatus. The enzyme catalyses ATP + H2O + phospholipidSide 1 = ADP + phosphate + phospholipidSide 2.. It catalyses the reaction a 1,2-diacyl-sn-glycero-3-phospho-L-serine(out) + ATP + H2O = a 1,2-diacyl-sn-glycero-3-phospho-L-serine(in) + ADP + phosphate + H(+). Its function is as follows. Catalytic component of a P4-ATPase flippase complex which catalyzes the hydrolysis of ATP coupled to the transport of aminophospholipids from the outer to the inner leaflet of various membranes and ensures the maintenance of asymmetric distribution of phospholipids. Phospholipid translocation also seems to be implicated in vesicle formation and in uptake of lipid signaling molecules. May also participate in the establishment of the canalicular membrane integrity by ensuring asymmetric distribution of phospholipids in the canicular membrane. This chain is Phospholipid-transporting ATPase IC (atp8b1), found in Xenopus tropicalis (Western clawed frog).